The primary structure comprises 299 residues: Probable lipid kinase YegS-like (299 aa).

The region spanning 2–133 (ATFPASLLIL…IDIAQVNDKT (132 aa)) is the DAGKc domain. Residues threonine 40, 66 to 72 (GDGTINE), and threonine 95 contribute to the ATP site. 3 residues coordinate Mg(2+): leucine 215, aspartate 218, and leucine 220. Glutamate 271 acts as the Proton acceptor in catalysis.

This sequence belongs to the diacylglycerol/lipid kinase family. YegS lipid kinase subfamily. Requires Mg(2+) as cofactor. Ca(2+) is required as a cofactor.

The protein localises to the cytoplasm. Probably phosphorylates lipids; the in vivo substrate is unknown. The chain is Probable lipid kinase YegS-like from Citrobacter koseri (strain ATCC BAA-895 / CDC 4225-83 / SGSC4696).